Here is a 471-residue protein sequence, read N- to C-terminus: ATP synthase subunit beta (471 aa).

ATP is bound at residue 152–159; that stretch reads GGAGVGKT.

It belongs to the ATPase alpha/beta chains family. As to quaternary structure, F-type ATPases have 2 components, CF(1) - the catalytic core - and CF(0) - the membrane proton channel. CF(1) has five subunits: alpha(3), beta(3), gamma(1), delta(1), epsilon(1). CF(0) has three main subunits: a(1), b(2) and c(9-12). The alpha and beta chains form an alternating ring which encloses part of the gamma chain. CF(1) is attached to CF(0) by a central stalk formed by the gamma and epsilon chains, while a peripheral stalk is formed by the delta and b chains.

It localises to the cell membrane. The enzyme catalyses ATP + H2O + 4 H(+)(in) = ADP + phosphate + 5 H(+)(out). Produces ATP from ADP in the presence of a proton gradient across the membrane. The catalytic sites are hosted primarily by the beta subunits. The protein is ATP synthase subunit beta of Herpetosiphon aurantiacus (Herpetosiphon giganteus).